Consider the following 878-residue polypeptide: Phosphoenolpyruvate carboxylase (878 aa).

Active-site residues include histidine 140 and lysine 545.

Belongs to the PEPCase type 1 family. It depends on Mg(2+) as a cofactor.

The catalysed reaction is oxaloacetate + phosphate = phosphoenolpyruvate + hydrogencarbonate. Forms oxaloacetate, a four-carbon dicarboxylic acid source for the tricarboxylic acid cycle. The protein is Phosphoenolpyruvate carboxylase of Pseudomonas syringae pv. syringae (strain B728a).